The following is a 490-amino-acid chain: COP9 signalosome complex subunit 2 (490 aa).

Acidic residues predominate over residues 1–30 (MSDDDFMQDSDQEYDFEYEDDEEEDTGDVD). Positions 1-32 (MSDDDFMQDSDQEYDFEYEDDEEEDTGDVDIE) are disordered. The PCI domain maps to 250–418 (SEENWKEAQS…GVLELESRED (169 aa)). The segment at 469–490 (DTMRSMGSGKRGRRVGLTQRAY) is disordered.

This sequence belongs to the CSN2 family. As to quaternary structure, component of the COP9 signalosome (CSN) complex.

Its subcellular location is the cytoplasm. It is found in the nucleus. In terms of biological role, component of the COP9 signalosome (CSN) complex that acts as an regulator of the ubiquitin (Ubl) conjugation pathway by mediating the deneddylation of the cullin subunit of SCF-type E3 ubiquitin-protein ligase complexes. The CSN complex is involved in the regulation of the circadian clock through its control of the stability of the SCF(FWD-1) complex. The polypeptide is COP9 signalosome complex subunit 2 (csn-2) (Neurospora crassa (strain ATCC 24698 / 74-OR23-1A / CBS 708.71 / DSM 1257 / FGSC 987)).